Here is a 78-residue protein sequence, read N- to C-terminus: Surfactant-associated protein 2 (78 aa).

Residues 1–19 (MGSGLPLVLLLTLLGSSHG) form the signal peptide. A glycan (N-linked (GlcNAc...) asparagine) is linked at Asn-37.

Post-translationally, N-glycosylated. Predominantly expressed in lung, where it is detected in type II pneumocytes in the alveolus, and in nonciliated epithelium in bronchioli (at protein level). Also detected at lower levels in cervix, esophagus, stomach, testis and kidney.

The protein localises to the secreted. It localises to the cytoplasmic vesicle. Its subcellular location is the secretory vesicle. It is found in the golgi apparatus. Functionally, putative surfactant protein. This chain is Surfactant-associated protein 2 (SFTA2), found in Homo sapiens (Human).